Reading from the N-terminus, the 64-residue chain is Protein DsrB (64 aa).

This sequence belongs to the DsrB family.

The polypeptide is Protein DsrB (Salmonella enteritidis PT4 (strain P125109)).